Consider the following 557-residue polypeptide: CTP synthase (557 aa).

The tract at residues 1 to 267 (MAKFVFVTGG…CREVLDVLDL (267 aa)) is amidoligase domain. Serine 13 is a CTP binding site. Serine 13 is a UTP binding site. ATP contacts are provided by residues 14–19 (SIGKGI) and aspartate 71. The Mg(2+) site is built by aspartate 71 and glutamate 141. CTP is bound by residues 148-150 (DIE), 188-193 (KTKPTQ), and lysine 224. UTP contacts are provided by residues 188 to 193 (KTKPTQ) and lysine 224. Residues 292–534 (KVALVGKYVQ…IEAAQQRLPC (243 aa)) form the Glutamine amidotransferase type-1 domain. Glycine 354 is a binding site for L-glutamine. The active-site Nucleophile; for glutamine hydrolysis is the cysteine 381. L-glutamine contacts are provided by residues 382-385 (LGMQ), glutamate 405, and arginine 462. Residues histidine 507 and glutamate 509 contribute to the active site. A disordered region spans residues 532-557 (LPCSPSEAMRQQNNSAAGSSHPSLQP). The span at 540–557 (MRQQNNSAAGSSHPSLQP) shows a compositional bias: polar residues.

The protein belongs to the CTP synthase family. In terms of assembly, homotetramer.

The enzyme catalyses UTP + L-glutamine + ATP + H2O = CTP + L-glutamate + ADP + phosphate + 2 H(+). It catalyses the reaction L-glutamine + H2O = L-glutamate + NH4(+). It carries out the reaction UTP + NH4(+) + ATP = CTP + ADP + phosphate + 2 H(+). It functions in the pathway pyrimidine metabolism; CTP biosynthesis via de novo pathway; CTP from UDP: step 2/2. Allosterically activated by GTP, when glutamine is the substrate; GTP has no effect on the reaction when ammonia is the substrate. The allosteric effector GTP functions by stabilizing the protein conformation that binds the tetrahedral intermediate(s) formed during glutamine hydrolysis. Inhibited by the product CTP, via allosteric rather than competitive inhibition. In terms of biological role, catalyzes the ATP-dependent amination of UTP to CTP with either L-glutamine or ammonia as the source of nitrogen. Regulates intracellular CTP levels through interactions with the four ribonucleotide triphosphates. The chain is CTP synthase from Synechococcus sp. (strain CC9311).